The chain runs to 343 residues: N-acetyl-gamma-glutamyl-phosphate reductase (343 aa).

Residue cysteine 146 is part of the active site.

Belongs to the NAGSA dehydrogenase family. Type 1 subfamily.

The protein resides in the cytoplasm. The catalysed reaction is N-acetyl-L-glutamate 5-semialdehyde + phosphate + NADP(+) = N-acetyl-L-glutamyl 5-phosphate + NADPH + H(+). It participates in amino-acid biosynthesis; L-arginine biosynthesis; N(2)-acetyl-L-ornithine from L-glutamate: step 3/4. Its function is as follows. Catalyzes the NADPH-dependent reduction of N-acetyl-5-glutamyl phosphate to yield N-acetyl-L-glutamate 5-semialdehyde. This is N-acetyl-gamma-glutamyl-phosphate reductase from Pseudarthrobacter chlorophenolicus (strain ATCC 700700 / DSM 12829 / CIP 107037 / JCM 12360 / KCTC 9906 / NCIMB 13794 / A6) (Arthrobacter chlorophenolicus).